The sequence spans 1019 residues: MNSIQVKNEPMLASFASTSTNGKAKRSAKPSLFSGSEVSSDDDEEKPLAKRPKVEDSDSDAPLTSTVSSQNGVQKRSGSSNNDDNDDDSDSDSDAPLTALVKKSNGSDDDEDDDDDDDEGDDDDEEDDDDDDDDDDKPLSKSSKSNRKPPKTMSITGSGEKKWDVLIHKGPRFPDPYQPLPKDVKLKYDGRPVDLPWQTEEIAMFYAVKLETQHAQNAIFNRNFFDDFKTDLKKYPPRDGTQIKSFDKLDFRDMYNYWRSLKDAELERKKALAPSARKREIEERKAEETKWKICLVDGVEQRVGNVNVEPPGLFLGRGAHPKAGKVKRRISPGDITINHSADHPAPQPPAGMGDWAEVVEKKDVTWLAYWKENINGQYKYVFLDATSNFKTNSDREKFEKARKLDTVVKQIRRDVNKNLKSKVRHERQIATIVWLIDNFSLRAGNEKGEDEAETYGVCSLRCEHAQIKMPDTIHLEFLGKDSMKFEEDLKITNPDVFKNIAMFLKSNGMKDKSGNYVRKKPSDPIFCAPESGSGKMQPLQPNSVNQFLSKYMKGLSAKVFRTYNASVTFQGLLEQTEEWLKSRPNAAEREINQTNLRLAYNEANRQVAILCNHQKTVNPMLLNRNLERTQDKIFQIRYEIMKEQQKILTFHKVSELKKEFKVKEHPFMKQFDKIMQKQDLDAEKVKQYEEQMISDKKSKLESTFKRQQSELQYQLEQKGLTGDDGTPKKGKKAKNVEEEVRSSIKGFKDKKQVDEELKALNETAKRLEKERKTNKSQATSCNFVSSAKKILSKYEMIKKQEAELVNKNNTSDVALSTSKLNYIDPRITLAWLKEWDDRLSDLGQGKAAPKKKVKKEEEENDIKPKKKDAKGAASKKRAAKTGLANSTGDSEKMELGLQVMNISQFFANALQKKFKWAASGDDGRDISAKWVFVKDAQSKMRKLDSAERKGQKGGSMAAMTDAADSKEAQPKVNCVLKKQTSADRKMSKPIKAVDKTEESDDDLSSDSSDDEDKPLAAVV.

The disordered stretch occupies residues 1 to 160; that stretch reads MNSIQVKNEP…KTMSITGSGE (160 aa). The segment covering 46 to 56 has biased composition (basic and acidic residues); the sequence is KPLAKRPKVED. Positions 62–78 are enriched in polar residues; that stretch reads PLTSTVSSQNGVQKRSG. 2 stretches are compositionally biased toward acidic residues: residues 83–93 and 107–136; these read DDNDDDSDSDS and SDDD…DDDD. 3 interaction with DNA regions span residues 379 to 380, 442 to 447, and 556 to 558; these read KY, RAGNEK, and SAK. Residues 386 to 860 enclose the Topo IB-type catalytic domain; the sequence is TSNFKTNSDR…KKVKKEEEEN (475 aa). The disordered stretch occupies residues 716 to 737; the sequence is EQKGLTGDDGTPKKGKKAKNVE. Y822 (O-(3'-phospho-DNA)-tyrosine intermediate) is an active-site residue. Disordered regions lie at residues 843–890 and 940–1019; these read GQGK…TGDS and MRKL…AAVV. The segment covering 854–863 has biased composition (basic and acidic residues); the sequence is KKEEEENDIK. The segment covering 864–879 has biased composition (basic residues); it reads PKKKDAKGAASKKRAA. 2 stretches are compositionally biased toward basic and acidic residues: residues 940–950 and 980–996; these read MRKLDSAERKG and TSAD…VDKT. The segment covering 997-1012 has biased composition (acidic residues); sequence EESDDDLSSDSSDDED.

This sequence belongs to the type IB topoisomerase family. Monomer.

The catalysed reaction is ATP-independent breakage of single-stranded DNA, followed by passage and rejoining.. Functionally, releases the supercoiling and torsional tension of DNA introduced during the DNA replication and transcription by transiently cleaving and rejoining one strand of the DNA duplex. Introduces a single-strand break via transesterification at a target site in duplex DNA. The scissile phosphodiester is attacked by the catalytic tyrosine of the enzyme, resulting in the formation of a DNA-(3'-phosphotyrosyl)-enzyme intermediate and the expulsion of a 5'-OH DNA strand. The free DNA strand then rotates around the intact phosphodiester bond on the opposing strand, thus removing DNA supercoils. Finally, in the religation step, the DNA 5'-OH attacks the covalent intermediate to expel the active-site tyrosine and restore the DNA phosphodiester backbone. The polypeptide is DNA topoisomerase 1 (TOP1) (Mycosarcoma maydis (Corn smut fungus)).